Reading from the N-terminus, the 835-residue chain is Protein translocase subunit SecA 1 (835 aa).

ATP is bound by residues Gln85, 103-107 (GEGKT), and Asp492. The disordered stretch occupies residues 788 to 807 (VQGEAVHPSSDGEEAKKKPV). 4 residues coordinate Zn(2+): Cys819, Cys821, Cys830, and Cys831.

Belongs to the SecA family. Monomer and homodimer. Part of the essential Sec protein translocation apparatus which comprises SecA, SecYEG and auxiliary proteins SecDF. Other proteins may also be involved. It depends on Zn(2+) as a cofactor.

Its subcellular location is the cell membrane. It localises to the cytoplasm. It carries out the reaction ATP + H2O + cellular proteinSide 1 = ADP + phosphate + cellular proteinSide 2.. Part of the Sec protein translocase complex. Interacts with the SecYEG preprotein conducting channel. Has a central role in coupling the hydrolysis of ATP to the transfer of proteins into and across the cell membrane, serving as an ATP-driven molecular motor driving the stepwise translocation of polypeptide chains across the membrane. In Bacillus thuringiensis subsp. konkukian (strain 97-27), this protein is Protein translocase subunit SecA 1.